A 314-amino-acid polypeptide reads, in one-letter code: tRNA dimethylallyltransferase (314 aa).

12–19 (GPTAGGKS) contacts ATP. A substrate-binding site is contributed by 14 to 19 (TAGGKS). Residues 37 to 40 (DSMQ) are interaction with substrate tRNA.

This sequence belongs to the IPP transferase family. Monomer. Mg(2+) is required as a cofactor.

The catalysed reaction is adenosine(37) in tRNA + dimethylallyl diphosphate = N(6)-dimethylallyladenosine(37) in tRNA + diphosphate. In terms of biological role, catalyzes the transfer of a dimethylallyl group onto the adenine at position 37 in tRNAs that read codons beginning with uridine, leading to the formation of N6-(dimethylallyl)adenosine (i(6)A). The polypeptide is tRNA dimethylallyltransferase (Rhodospirillum centenum (strain ATCC 51521 / SW)).